The chain runs to 365 residues: UDP-N-acetylglucosamine--N-acetylmuramyl-(pentapeptide) pyrophosphoryl-undecaprenol N-acetylglucosamine transferase (365 aa).

Residues 17–19 (TGG), N129, R167, S194, I250, 269–274 (ALTVSE), and Q295 contribute to the UDP-N-acetyl-alpha-D-glucosamine site.

It belongs to the glycosyltransferase 28 family. MurG subfamily.

The protein localises to the cell inner membrane. The catalysed reaction is di-trans,octa-cis-undecaprenyl diphospho-N-acetyl-alpha-D-muramoyl-L-alanyl-D-glutamyl-meso-2,6-diaminopimeloyl-D-alanyl-D-alanine + UDP-N-acetyl-alpha-D-glucosamine = di-trans,octa-cis-undecaprenyl diphospho-[N-acetyl-alpha-D-glucosaminyl-(1-&gt;4)]-N-acetyl-alpha-D-muramoyl-L-alanyl-D-glutamyl-meso-2,6-diaminopimeloyl-D-alanyl-D-alanine + UDP + H(+). It functions in the pathway cell wall biogenesis; peptidoglycan biosynthesis. Its function is as follows. Cell wall formation. Catalyzes the transfer of a GlcNAc subunit on undecaprenyl-pyrophosphoryl-MurNAc-pentapeptide (lipid intermediate I) to form undecaprenyl-pyrophosphoryl-MurNAc-(pentapeptide)GlcNAc (lipid intermediate II). In Shewanella piezotolerans (strain WP3 / JCM 13877), this protein is UDP-N-acetylglucosamine--N-acetylmuramyl-(pentapeptide) pyrophosphoryl-undecaprenol N-acetylglucosamine transferase.